Here is a 621-residue protein sequence, read N- to C-terminus: Glucose 1,6-bisphosphate synthase (621 aa).

Alpha-D-glucose 1,6-bisphosphate contacts are provided by Arg-73 and Ser-175. The active-site Phosphoserine intermediate is Ser-175. Mg(2+) is bound by residues Ser-175, Asp-332, Asp-334, and Asp-336. Ser-175 is modified (phosphoserine). Asp-336, Arg-337, Glu-433, Ser-435, and Lys-447 together coordinate alpha-D-glucose 1,6-bisphosphate.

It belongs to the phosphohexose mutase family. As to expression, expressed at highest levels in the brain and testis, at intermediate levels in thymus, spleen, lung and skeletal muscle, and at lowest levels in kidney, liver and heart.

It localises to the cytoplasm. The protein localises to the cytosol. It catalyses the reaction (2R)-3-phospho-glyceroyl phosphate + alpha-D-glucose 1-phosphate = alpha-D-glucose 1,6-bisphosphate + (2R)-3-phosphoglycerate + H(+). It carries out the reaction alpha-D-glucose 6-phosphate + (2R)-3-phospho-glyceroyl phosphate = alpha-D-glucose 1,6-bisphosphate + (2R)-3-phosphoglycerate + H(+). The catalysed reaction is (2R)-3-phospho-glyceroyl phosphate + alpha-D-ribose 1-phosphate = alpha-D-ribose 1,5-bisphosphate + (2R)-3-phosphoglycerate + H(+). The enzyme catalyses 2-deoxy-alpha-D-ribose 1-phosphate + (2R)-3-phospho-glyceroyl phosphate = 2-deoxy-alpha-D-ribose 1,5-bisphosphate + (2R)-3-phosphoglycerate + H(+). It catalyses the reaction (2R)-3-phospho-glyceroyl phosphate + alpha-D-mannose 1-phosphate = alpha-D-mannose 1,6-bisphosphate + (2R)-3-phosphoglycerate + H(+). Functionally, glucose 1,6-bisphosphate synthase using 1,3-bisphosphoglycerate as a phosphate donor and a series of 1-phosphate sugars, including glucose 1-phosphate, mannose 1-phosphate, ribose 1-phosphate and deoxyribose 1-phosphate, as acceptors. In vitro, also exhibits very low phosphopentomutase and phosphoglucomutase activity which are most probably not physiologically relevant. The polypeptide is Glucose 1,6-bisphosphate synthase (Mus musculus (Mouse)).